Consider the following 320-residue polypeptide: o-succinylbenzoate synthase (320 aa).

Lys-133 serves as the catalytic Proton donor. 3 residues coordinate Mg(2+): Asp-161, Glu-190, and Asp-213. Lys-235 (proton acceptor) is an active-site residue.

This sequence belongs to the mandelate racemase/muconate lactonizing enzyme family. MenC type 1 subfamily. It depends on a divalent metal cation as a cofactor.

The enzyme catalyses (1R,6R)-6-hydroxy-2-succinyl-cyclohexa-2,4-diene-1-carboxylate = 2-succinylbenzoate + H2O. Its pathway is quinol/quinone metabolism; 1,4-dihydroxy-2-naphthoate biosynthesis; 1,4-dihydroxy-2-naphthoate from chorismate: step 4/7. It participates in quinol/quinone metabolism; menaquinone biosynthesis. Functionally, converts 2-succinyl-6-hydroxy-2,4-cyclohexadiene-1-carboxylate (SHCHC) to 2-succinylbenzoate (OSB). This Shigella boydii serotype 4 (strain Sb227) protein is o-succinylbenzoate synthase.